The following is a 43-amino-acid chain: Protein PsbN (43 aa).

A helical membrane pass occupies residues 5 to 27 (NLVTISISCLLVSLTGYAIYTSF).

This sequence belongs to the PsbN family.

It is found in the plastid. The protein localises to the chloroplast thylakoid membrane. Its function is as follows. May play a role in photosystem I and II biogenesis. This Gnetum gnemon (Spanish joint-fir) protein is Protein PsbN.